The primary structure comprises 379 residues: Sperm microtubule associated protein 2 (379 aa).

Residues 1 to 82 (MGDSRRRSLG…EFPETLDPKE (82 aa)) are disordered. Basic and acidic residues-rich tracts occupy residues 19-29 (GRSEREQDGDP) and 38-50 (ESRRVTDPERQDL). The span at 56 to 76 (GPEDPEEELPPEEVAGEEFPE) shows a compositional bias: acidic residues. 6 THEG repeats span residues 118–137 (KARKRRRRRRLMELAEPKIN), 184–203 (TITVPAVSRRVEELSRPKRF), 222–241 (SSLEYRASSRLKELAAPKIR), 258–277 (AAQMAVPSSRILQLSKPKAP), 290–309 (PKPHVSDHNRLLHLARPKAQ), and 326–345 (VTKKVVASPRIISLAKPKVR). S295 is modified (phosphoserine). The disordered stretch occupies residues 344–379 (VRKGLNEGYDRRPLASMSLPPPKASPEKCDQPRPGL). Composition is skewed to basic and acidic residues over residues 347–356 (GLNEGYDRRP) and 368–379 (SPEKCDQPRPGL).

As to quaternary structure, interacts with CCT5. In terms of tissue distribution, testis specific.

It localises to the nucleus. Its function is as follows. May be involved (but not essential) in spermatogenesis. The protein is Sperm microtubule associated protein 2 of Homo sapiens (Human).